The primary structure comprises 453 residues: MEASLLKKNQSIELTIEDLTHDGSGVGKIDGYPLFIPNTLPGEKVTAKIIKLNKNYGFARMENIETVSADRVEPPCAVYSKCGGCSLQHLSYDGQLEFKRNQVEETMKRIGKLNVEVPETLGMENPWRYRNKSQVPVGFVNGKLTAGFYQKRSHAIIDMSTCLIHNEQGDFAVQKTREILAKYGTEPYDEQTGKGDIRHIMTRFAHTTGQLMIVLVTTKERMPFKEEIVRELVEQLELTSIVQNINPHKTNVIFGDRTKTLWGKDIIEDTIHGIRFAISARSFYQVNPIQTEVLYQQAIDAAELTGEETVIDAYCGIGSISLCLAKKAKHVYGVEIVDQAIQDARANAELNELANTTFETGKAEEVIPAWYKAGIVADVLVVDPPRKGCDEKLLETILAMKPKKVVYVSCNPGTLARDMKILTDGGYVAKKVQPVDMFPMTTHIEAVTVLHLN.

The TRAM domain maps to 5–63 (LLKKNQSIELTIEDLTHDGSGVGKIDGYPLFIPNTLPGEKVTAKIIKLNKNYGFARMEN). C76, C82, C85, and C162 together coordinate [4Fe-4S] cluster. S-adenosyl-L-methionine contacts are provided by Q285, Y314, E335, and D383. The active-site Nucleophile is the C410.

Belongs to the class I-like SAM-binding methyltransferase superfamily. RNA M5U methyltransferase family.

This is an uncharacterized protein from Listeria monocytogenes serotype 4b (strain F2365).